Consider the following 392-residue polypeptide: 2'-deamino-2'-hydroxyneamine transaminase (392 aa).

Lysine 249 is subject to N6-(pyridoxal phosphate)lysine.

The protein belongs to the class-III pyridoxal-phosphate-dependent aminotransferase family. Pyridoxal 5'-phosphate is required as a cofactor.

The enzyme catalyses neamine + 2-oxoglutarate = 6'-oxoparomamine + L-glutamate. It catalyses the reaction 2'-deamino-2'-hydroxyneamine + 2-oxoglutarate = 2'-deamino-2'-hydroxy-6'-dehydroparomamine + L-glutamate. It participates in antibiotic biosynthesis; kanamycin biosynthesis. Its function is as follows. Aminotransferase that has 6'-oxoglucosaminyl:L-glutamate aminotransferase activity by catalyzing pyridoxal-5'-phosphate-mediated transamination leading to the conversion of paromamine to neamine in the biosynthetic pathway of kanamycin B. This chain is 2'-deamino-2'-hydroxyneamine transaminase (kacL), found in Streptomyces kanamyceticus.